Here is a 507-residue protein sequence, read N- to C-terminus: Maturase K (507 aa).

Belongs to the intron maturase 2 family. MatK subfamily.

It is found in the plastid. The protein resides in the chloroplast. Functionally, usually encoded in the trnK tRNA gene intron. Probably assists in splicing its own and other chloroplast group II introns. The sequence is that of Maturase K from Cananga odorata (Ylang-ylang tree).